The sequence spans 269 residues: Fructose-2,6-bisphosphatase TIGAR (269 aa).

Catalysis depends on His11, which acts as the Tele-phosphohistidine intermediate. The Proton donor/acceptor role is filled by Glu89.

It belongs to the phosphoglycerate mutase family. Interacts with HK2; the interaction increases hexokinase HK2 activity in a hypoxia- and HIF1A-dependent manner, resulting in the regulation of mitochondrial membrane potential, thus increasing NADPH production and decreasing intracellular ROS levels. Expressed in olfactory bulb, cerebellum, and cortex. Expressed in neurons and astrocytes (at protein level). Expressed in intestinal crypt.

The protein resides in the cytoplasm. It localises to the nucleus. It is found in the mitochondrion. It catalyses the reaction beta-D-fructose 2,6-bisphosphate + H2O = beta-D-fructose 6-phosphate + phosphate. In terms of biological role, fructose-bisphosphatase hydrolyzing fructose-2,6-bisphosphate as well as fructose-1,6-bisphosphate. Acts as a negative regulator of glycolysis by lowering intracellular levels of fructose-2,6-bisphosphate in a p53/TP53-dependent manner, resulting in the pentose phosphate pathway (PPP) activation and NADPH production. Contributes to the generation of reduced glutathione to cause a decrease in intracellular reactive oxygen species (ROS) content, correlating with its ability to protect cells from oxidative or metabolic stress-induced cell death. Plays a role in promoting protection against cell death during hypoxia by decreasing mitochondria ROS levels in a HK2-dependent manner through a mechanism that is independent of its fructose-bisphosphatase activity. In response to cardiac damage stress, mediates p53-induced inhibition of myocyte mitophagy through ROS levels reduction and the subsequent inactivation of BNIP3. Reduced mitophagy results in an enhanced apoptotic myocyte cell death, and exacerbates cardiac damage. Plays a role in adult intestinal regeneration; contributes to the growth, proliferation and survival of intestinal crypts following tissue ablation. Plays a neuroprotective role against ischemic brain damage by enhancing PPP flux and preserving mitochondria functions. Protects glioma cells from hypoxia- and ROS-induced cell death by inhibiting glycolysis and activating mitochondrial energy metabolism and oxygen consumption in a TKTL1-dependent and p53/TP53-independent manner. Plays a role in cancer cell survival by promoting DNA repair through activating PPP flux in a CDK5-ATM-dependent signaling pathway during hypoxia and/or genome stress-induced DNA damage responses. Involved in intestinal tumor progression. This Mus musculus (Mouse) protein is Fructose-2,6-bisphosphatase TIGAR.